We begin with the raw amino-acid sequence, 335 residues long: Nucleoid-associated protein PC1_1634 (335 aa).

The protein belongs to the YejK family.

It is found in the cytoplasm. Its subcellular location is the nucleoid. The polypeptide is Nucleoid-associated protein PC1_1634 (Pectobacterium carotovorum subsp. carotovorum (strain PC1)).